Here is a 361-residue protein sequence, read N- to C-terminus: MTVPCIPRGPVMADIAAFRLTEEEKQRLLDPAVGGVILFRRNFQNIAQLKELTAEIKALRTPELIIAVDHEGGRVQRFIEGFTRLPAMNVLGQIWDKDGASAAETAARQIGWVLATELSACGIDLSFTPVLDLDWGNCAVIGNRSFHRNPEAVARLALALQKGLEKGGMKSCGKHFPGHGFVEGDSHLVLPEDGRSLSELEAADLAPFRIMSREGMAAVMPAHVVYPQVDTKPAGFSEIWLKQILRRDIGFKGVIFSDDLTMEGACGAGGIKERARISFEAGCDIVLVCNRPDLVDELRDDFRIPDNPALAQRWQYMANTLGSAAAQAVIQTADFQAAQAFVAGLASPQDTAGGVKVGEAF.

Substrate is bound by residues Asp-69, Arg-77, Arg-144, and 174-175; that span reads KH. The active-site Proton donor/acceptor is His-187. Asp-258 acts as the Nucleophile in catalysis.

Belongs to the glycosyl hydrolase 3 family. NagZ subfamily.

The protein resides in the cytoplasm. The enzyme catalyses Hydrolysis of terminal non-reducing N-acetyl-D-hexosamine residues in N-acetyl-beta-D-hexosaminides.. It participates in cell wall biogenesis; peptidoglycan recycling. Plays a role in peptidoglycan recycling by cleaving the terminal beta-1,4-linked N-acetylglucosamine (GlcNAc) from peptide-linked peptidoglycan fragments, giving rise to free GlcNAc, anhydro-N-acetylmuramic acid and anhydro-N-acetylmuramic acid-linked peptides. This chain is Beta-hexosaminidase, found in Neisseria meningitidis serogroup A / serotype 4A (strain DSM 15465 / Z2491).